The sequence spans 57 residues: uncharacterized protein (57 aa).

This is an uncharacterized protein from Saccharomyces cerevisiae (strain ATCC 204508 / S288c) (Baker's yeast).